A 48-amino-acid chain; its full sequence is Ambineela (48 aa).

In terms of assembly, monomer. Post-translationally, the blue color is due to an unidentified non-fluorescent cofactor, covalently bound to it.

In terms of biological role, ambineela is a blue protein and has a pI of 8.7. The protein is Ambineela of Acidianus ambivalens (Desulfurolobus ambivalens).